The sequence spans 438 residues: MNEINKIWQKILEIILEKVGESTFELWFSPIKLLDIKNSEAFIEVPNRFFKDWIEDNFPSIISDSFYQITGSQVEVKYIITGKEHETGLIEEKKQVIKKGNLNPKYTFDTFVVGPSNQFAHAASFRVAENPGFAYNPLFIYGGVGLGKTHLITAIGNYILDKKPEMNVCYISSEQFTGEFVSAIRHEKMPEFRNKYRTVDVFLVDDIQFIAGKDSTQEEFFHTFNELYSKQKQIVISSDRPPMEISDITDRLRSRFGMGLIADIQPPEIETRLAILYKKADMEGVKLPEDVAYFIASRVKSNVRELEGSLIKLCAYTSLTKVPISMDVAKYVLRDLLPDENKPITIELIQKAVCEAVGLKIQDIKSKKRTKEISNARKLAMYITKKLTNLSLAEIGNAFGGKDHATVIYACKQVEKEKEKDESISRLIDSIIKKVTGQ.

Positions 1-74 are domain I, interacts with DnaA modulators; it reads MNEINKIWQK…SFYQITGSQV (74 aa). The interval 74–100 is domain II; that stretch reads VEVKYIITGKEHETGLIEEKKQVIKKG. Residues 101–317 are domain III, AAA+ region; that stretch reads NLNPKYTFDT…GSLIKLCAYT (217 aa). Gly-145, Gly-147, Lys-148, and Thr-149 together coordinate ATP. The domain IV, binds dsDNA stretch occupies residues 318–438; the sequence is SLTKVPISMD…DSIIKKVTGQ (121 aa).

It belongs to the DnaA family. In terms of assembly, oligomerizes as a right-handed, spiral filament on DNA at oriC.

It is found in the cytoplasm. In terms of biological role, plays an essential role in the initiation and regulation of chromosomal replication. ATP-DnaA binds to the origin of replication (oriC) to initiate formation of the DNA replication initiation complex once per cell cycle. Binds the DnaA box (a 9 base pair repeat at the origin) and separates the double-stranded (ds)DNA. Forms a right-handed helical filament on oriC DNA; dsDNA binds to the exterior of the filament while single-stranded (ss)DNA is stabiized in the filament's interior. The ATP-DnaA-oriC complex binds and stabilizes one strand of the AT-rich DNA unwinding element (DUE), permitting loading of DNA polymerase. After initiation quickly degrades to an ADP-DnaA complex that is not apt for DNA replication. Binds acidic phospholipids. This is Chromosomal replication initiator protein DnaA from Thermodesulfovibrio yellowstonii (strain ATCC 51303 / DSM 11347 / YP87).